Reading from the N-terminus, the 311-residue chain is Transmembrane protein DDB_G0273707/DDB_G0273361 (311 aa).

A disordered region spans residues 1–113; it reads MNEIEVDNLS…NNNNNKNENN (113 aa). A glycan (N-linked (GlcNAc...) asparagine) is linked at Asn-8. The segment covering 9–18 has biased composition (polar residues); the sequence is LSHTNKNVAT. N-linked (GlcNAc...) asparagine glycans are attached at residues Asn-35, Asn-38, Asn-62, and Asn-76. Low complexity-rich tracts occupy residues 37 to 67 and 76 to 111; these read SNNSNNNNNNNNNNNNNNNNNNNNNNNSNSN and NNSNNNNNNNNNNNNNNNNNNNNNNNNNNNNNNKNE. Positions 95–124 form a coiled coil; the sequence is NNNNNNNNNNNNNNKNENNNKIKNEKINIL. Transmembrane regions (helical) follow at residues 150 to 170, 181 to 201, 208 to 228, 235 to 255, and 276 to 296; these read LEEIGWSWLSSFIGILVLALL, IFLLGSFAASAVLIFGAPKSP, LVLGHIVSATVGSIIRVALVY, VACALAVSLAIVGMHFTKSIH, and FYYIFVPVASGSLTMLLTALI.

It is found in the membrane. In Dictyostelium discoideum (Social amoeba), this protein is Transmembrane protein DDB_G0273707/DDB_G0273361.